An 83-amino-acid polypeptide reads, in one-letter code: uncharacterized protein (83 aa).

It is found in the plastid. The protein resides in the chloroplast. This is an uncharacterized protein from Pinus thunbergii (Japanese black pine).